A 425-amino-acid chain; its full sequence is Stabilizer of axonemal microtubules 4 (425 aa).

Disordered regions lie at residues 259 to 297 and 315 to 335; these read RGSD…YQPP and NKEP…SYEQ. The segment covering 260–272 has biased composition (basic and acidic residues); sequence GSDRDTGYSRVSE. Low complexity predominate over residues 277–290; sequence PRMPTPSSQPTSMS. Positions 321-332 are enriched in polar residues; that stretch reads FTLNNPSYVRSS.

Microtubule inner protein component of sperm flagellar doublet microtubules. Interacts with PPP1CA. In terms of tissue distribution, expressed in brain, ovaries and testis. Expressed in the tracheal epithelium and in secondary spermatocytes and spermatids present in the seminiferous tubule. Expressed in ependymal cells lining the ventricular walls of the brain.

Its subcellular location is the cell projection. It localises to the cilium. It is found in the cytoplasm. The protein resides in the cytoskeleton. The protein localises to the flagellum axoneme. This Rattus norvegicus (Rat) protein is Stabilizer of axonemal microtubules 4.